Consider the following 339-residue polypeptide: Serine/threonine-protein kinase SAPK2 (339 aa).

Residues 4 to 260 enclose the Protein kinase domain; the sequence is YEVIKDIGSG…IPEIKNHPWF (257 aa). Residues 10–18 and lysine 33 contribute to the ATP site; that span reads IGSGNFGVA. Residue aspartate 123 is the Proton acceptor of the active site. The C-terminal stretch occupies residues 253 to 339; it reads EIKNHPWFLK…EDSGDFVCAL (87 aa).

Belongs to the protein kinase superfamily. Ser/Thr protein kinase family. In terms of assembly, interacts with BZIP46. Interacts with ABI5 and PP2C30. Interacts with PP2C51. Post-translationally, phosphorylated. In terms of tissue distribution, expressed in leaf blades, leaf sheaths and roots. Expressed in shoots and roots of young seedlings.

The protein localises to the cytoplasm. The protein resides in the nucleus. The enzyme catalyses L-seryl-[protein] + ATP = O-phospho-L-seryl-[protein] + ADP + H(+). It carries out the reaction L-threonyl-[protein] + ATP = O-phospho-L-threonyl-[protein] + ADP + H(+). Its activity is regulated as follows. Activated by phosphorylation in response to hyperosmotic stress within 5 minutes. May play a role in signal transduction of hyperosmotic response. Can phosphorylate BZIP46 in vitro. Together with ABI5, PP2C30 and PYL5, is part of an abscisic acid (ABA) signaling unit that modulates seed germination and early seedling growth. This Oryza sativa subsp. japonica (Rice) protein is Serine/threonine-protein kinase SAPK2 (SAPK2).